The sequence spans 506 residues: MEAAVAAAAAAAGAVTTAVAPPPGAAVSNGVATAPPPFLMKTYEMVDDPATDAVVSWGPGNNSFVVWNTPEFARDLLPKYFKHSNFSSFVRQLNTYGFRKVDPDRWEFANEGFLRGQKHLLKTINRRKPTHGNNQVQQPQLPAAPVPACVEVGKFGMEEEIEMLKRDKNVLMQELVRLRQQQQTTDHQLQTLGKRLQGMEQRQQQMMSFLAKAMHSPGFLAQFVQQNENSRRRIVASNKKRRLPKQDGSLDSESASLDGQIVKYQPMINEAAKAMLRKILKLDSSHRFESMGNSDNFLLENYMPNGQGLDSSSSTRNSGVTLAEVPANSGLPYVATSSGLSAICSTSTPQIQCPVVLDNGIPKEVPNMSAVPSVPKAVAPGPTDINILEFPDLQDIVAEENVDIPGGGFEMPGPEGVFSLPEEGDDSVPIETDEILYNDDTQKLPAIIDSFWEQFLVASPLSVDNDEVDSGVLDQKETQQGNGWTKAENMANLTEQMGLLSSHHTG.

The stretch at 157–207 forms a coiled coil; the sequence is MEEEIEMLKRDKNVLMQELVRLRQQQQTTDHQLQTLGKRLQGMEQRQQQMM. A hydrophobic repeat HR-A/B region spans residues 164 to 214; it reads LKRDKNVLMQELVRLRQQQQTTDHQLQTLGKRLQGMEQRQQQMMSFLAKAM. The segment at 231-254 is disordered; sequence RRRIVASNKKRRLPKQDGSLDSES. Residues 232–243 are compositionally biased toward basic residues; it reads RRIVASNKKRRL. The Nuclear localization signal signature appears at 239–242; it reads KKRR. The AHA signature appears at 449 to 456; that stretch reads DSFWEQFL.

This sequence belongs to the HSF family. Class A subfamily. As to quaternary structure, homotrimer. In terms of processing, exhibits temperature-dependent phosphorylation.

The protein localises to the nucleus. In terms of biological role, transcriptional regulator that specifically binds DNA of heat shock promoter elements (HSE). The chain is Heat stress transcription factor A-1 (HSFA1) from Oryza sativa subsp. japonica (Rice).